Here is a 101-residue protein sequence, read N- to C-terminus: Small ribosomal subunit protein uS14A (101 aa).

The tract at residues 31–67 is disordered; that stretch reads LRRPSSTEAERLAAQRELRRQPRDASPTRVRNRDQID. Residues 38–53 are compositionally biased toward basic and acidic residues; that stretch reads EAERLAAQRELRRQPR.

The protein belongs to the universal ribosomal protein uS14 family. In terms of assembly, part of the 30S ribosomal subunit. Contacts proteins S3 and S10.

Its function is as follows. Binds 16S rRNA, required for the assembly of 30S particles and may also be responsible for determining the conformation of the 16S rRNA at the A site. The sequence is that of Small ribosomal subunit protein uS14A from Streptomyces coelicolor (strain ATCC BAA-471 / A3(2) / M145).